The primary structure comprises 725 residues: Catalase-peroxidase (725 aa).

Positions 98-226 (WHMAGSYRTS…LAAVQMGLIY (129 aa)) form a cross-link, tryptophyl-tyrosyl-methioninium (Trp-Tyr) (with M-252). The active-site Proton acceptor is the His-99. Residues 226–252 (YVNPEGVNGKSDPQATAYQMRETFARM) constitute a cross-link (tryptophyl-tyrosyl-methioninium (Tyr-Met) (with W-98)). A heme b-binding site is contributed by His-267.

The protein belongs to the peroxidase family. Peroxidase/catalase subfamily. Homodimer or homotetramer. Requires heme b as cofactor. Formation of the three residue Trp-Tyr-Met cross-link is important for the catalase, but not the peroxidase activity of the enzyme.

The enzyme catalyses H2O2 + AH2 = A + 2 H2O. The catalysed reaction is 2 H2O2 = O2 + 2 H2O. Functionally, bifunctional enzyme with both catalase and broad-spectrum peroxidase activity. The protein is Catalase-peroxidase of Paracoccus denitrificans (strain Pd 1222).